The chain runs to 268 residues: Hydroxyethylthiazole kinase (268 aa).

Substrate is bound at residue Met-49. Lys-124 and Thr-168 together coordinate ATP. Ala-195 is a substrate binding site.

It belongs to the Thz kinase family. Mg(2+) is required as a cofactor.

The enzyme catalyses 5-(2-hydroxyethyl)-4-methylthiazole + ATP = 4-methyl-5-(2-phosphooxyethyl)-thiazole + ADP + H(+). Its pathway is cofactor biosynthesis; thiamine diphosphate biosynthesis; 4-methyl-5-(2-phosphoethyl)-thiazole from 5-(2-hydroxyethyl)-4-methylthiazole: step 1/1. In terms of biological role, catalyzes the phosphorylation of the hydroxyl group of 4-methyl-5-beta-hydroxyethylthiazole (THZ). This is Hydroxyethylthiazole kinase from Archaeoglobus fulgidus (strain ATCC 49558 / DSM 4304 / JCM 9628 / NBRC 100126 / VC-16).